Here is a 151-residue protein sequence, read N- to C-terminus: Probable ribonuclease P/MRP protein subunit POP5 (151 aa).

It belongs to the eukaryotic/archaeal RNase P protein component 2 family. As to quaternary structure, component of nuclear RNase P and RNase MRP ribonucleoproteins. Interacts with GAF1/RPP30.

Its subcellular location is the nucleus. It localises to the nucleolus. Functionally, essential protein required during embryogenesis. Component of ribonuclease P, a protein complex that generates mature tRNA molecules by cleaving their 5'-ends. Also a component of RNase MRP. The polypeptide is Probable ribonuclease P/MRP protein subunit POP5 (EMB1687) (Arabidopsis thaliana (Mouse-ear cress)).